The following is a 276-amino-acid chain: NH(3)-dependent NAD(+) synthetase (276 aa).

43-50 (GISGGVDS) lines the ATP pocket. Mg(2+) is bound at residue Asp49. Arg146 contributes to the deamido-NAD(+) binding site. Thr166 contacts ATP. A Mg(2+)-binding site is contributed by Glu171. Residues Lys179 and Asp186 each contribute to the deamido-NAD(+) site. ATP contacts are provided by Lys195 and Thr217. 266 to 267 (HK) is a binding site for deamido-NAD(+).

This sequence belongs to the NAD synthetase family. As to quaternary structure, homodimer.

The catalysed reaction is deamido-NAD(+) + NH4(+) + ATP = AMP + diphosphate + NAD(+) + H(+). It participates in cofactor biosynthesis; NAD(+) biosynthesis; NAD(+) from deamido-NAD(+) (ammonia route): step 1/1. Its function is as follows. Catalyzes the ATP-dependent amidation of deamido-NAD to form NAD. Uses ammonia as a nitrogen source. The sequence is that of NH(3)-dependent NAD(+) synthetase from Shewanella baltica (strain OS223).